Here is a 483-residue protein sequence, read N- to C-terminus: Glutamyl-tRNA(Gln) amidotransferase subunit A (483 aa).

Catalysis depends on charge relay system residues K77 and S152. Catalysis depends on S176, which acts as the Acyl-ester intermediate.

This sequence belongs to the amidase family. GatA subfamily. Heterotrimer of A, B and C subunits.

It catalyses the reaction L-glutamyl-tRNA(Gln) + L-glutamine + ATP + H2O = L-glutaminyl-tRNA(Gln) + L-glutamate + ADP + phosphate + H(+). In terms of biological role, allows the formation of correctly charged Gln-tRNA(Gln) through the transamidation of misacylated Glu-tRNA(Gln) in organisms which lack glutaminyl-tRNA synthetase. The reaction takes place in the presence of glutamine and ATP through an activated gamma-phospho-Glu-tRNA(Gln). The protein is Glutamyl-tRNA(Gln) amidotransferase subunit A of Listeria monocytogenes serovar 1/2a (strain ATCC BAA-679 / EGD-e).